The chain runs to 498 residues: MRINPTTSXPGVSTLEEKTLGRITQIIGPVLDVAFPPGKMPNINNSLXVKGRDTVGQQINVTCXVQQLLGNNRVRAVAMSATDGLMRGMEVIDTGAPLSVPVGGSTLGRIFNVLGEPVDNLGPVDTRTTSPIHRSAPAFIQLDTKLSIFETGIKVVDLLAPYRRGGKIGLFGGAGVGKTVLIMELINNIAKAHGGVSVFGGVGERTREGNDLYMEMKESGVINEQNIAESKVALVYGQMNEPPGARMRVGLTALTMAEYFRDVNEQDVLLFIDNISRFVQAGSEVSALLGRMPSAVGYQPTLSTEMGSLQERITSTKEGSITSIQAVYVPADDLTDPAPATTFAHLDATTVLSRGLAAKGIYPAVDPLDSTSTMLQPRIVGEEHYETAQRVKQTSQRYKELQDIIAILGLDELSEEDRLTVARARKIERFLSQPFFVAEVFTGSPGKYVGLAETIRGFQLILSGELDGLPEQAFYLVGNIDEATAKAMNLEVESKLKK.

172-179 provides a ligand contact to ATP; sequence GGAGVGKT.

The protein belongs to the ATPase alpha/beta chains family. F-type ATPases have 2 components, CF(1) - the catalytic core - and CF(0) - the membrane proton channel. CF(1) has five subunits: alpha(3), beta(3), gamma(1), delta(1), epsilon(1). CF(0) has four main subunits: a(1), b(1), b'(1) and c(9-12).

The protein resides in the plastid. The protein localises to the chloroplast thylakoid membrane. The enzyme catalyses ATP + H2O + 4 H(+)(in) = ADP + phosphate + 5 H(+)(out). Its function is as follows. Produces ATP from ADP in the presence of a proton gradient across the membrane. The catalytic sites are hosted primarily by the beta subunits. This Schisandra sphenanthera (Southern magnolia vine) protein is ATP synthase subunit beta, chloroplastic.